A 471-amino-acid chain; its full sequence is Glutamate--tRNA ligase (471 aa).

The 'HIGH' region motif lies at 9-19 (PSPTGYLHVGG). The short motif at 237–241 (KLSKR) is the 'KMSKS' region element. Position 240 (Lys240) interacts with ATP.

Belongs to the class-I aminoacyl-tRNA synthetase family. Glutamate--tRNA ligase type 1 subfamily. Monomer.

Its subcellular location is the cytoplasm. The enzyme catalyses tRNA(Glu) + L-glutamate + ATP = L-glutamyl-tRNA(Glu) + AMP + diphosphate. Functionally, catalyzes the attachment of glutamate to tRNA(Glu) in a two-step reaction: glutamate is first activated by ATP to form Glu-AMP and then transferred to the acceptor end of tRNA(Glu). The chain is Glutamate--tRNA ligase from Pectobacterium atrosepticum (strain SCRI 1043 / ATCC BAA-672) (Erwinia carotovora subsp. atroseptica).